The primary structure comprises 251 residues: Triosephosphate isomerase (251 aa).

9-11 (NWK) serves as a coordination point for substrate. The active-site Electrophile is the H95. The active-site Proton acceptor is the E167. Residues G173, S212, and 233 to 234 (GG) each bind substrate.

The protein belongs to the triosephosphate isomerase family. As to quaternary structure, homodimer.

The protein localises to the cytoplasm. The catalysed reaction is D-glyceraldehyde 3-phosphate = dihydroxyacetone phosphate. It participates in carbohydrate biosynthesis; gluconeogenesis. Its pathway is carbohydrate degradation; glycolysis; D-glyceraldehyde 3-phosphate from glycerone phosphate: step 1/1. Functionally, involved in the gluconeogenesis. Catalyzes stereospecifically the conversion of dihydroxyacetone phosphate (DHAP) to D-glyceraldehyde-3-phosphate (G3P). This Pseudomonas putida (strain GB-1) protein is Triosephosphate isomerase.